We begin with the raw amino-acid sequence, 399 residues long: Nicotinate phosphoribosyltransferase (399 aa).

His-217 is modified (phosphohistidine; by autocatalysis).

This sequence belongs to the NAPRTase family. Transiently phosphorylated on a His residue during the reaction cycle. Phosphorylation strongly increases the affinity for substrates and increases the rate of nicotinate D-ribonucleotide production. Dephosphorylation regenerates the low-affinity form of the enzyme, leading to product release.

It carries out the reaction nicotinate + 5-phospho-alpha-D-ribose 1-diphosphate + ATP + H2O = nicotinate beta-D-ribonucleotide + ADP + phosphate + diphosphate. Its pathway is cofactor biosynthesis; NAD(+) biosynthesis; nicotinate D-ribonucleotide from nicotinate: step 1/1. In terms of biological role, catalyzes the synthesis of beta-nicotinate D-ribonucleotide from nicotinate and 5-phospho-D-ribose 1-phosphate at the expense of ATP. In Burkholderia cenocepacia (strain HI2424), this protein is Nicotinate phosphoribosyltransferase.